Here is a 501-residue protein sequence, read N- to C-terminus: Probable malate:quinone oxidoreductase (501 aa).

This sequence belongs to the MQO family. FAD is required as a cofactor.

The enzyme catalyses (S)-malate + a quinone = a quinol + oxaloacetate. Its pathway is carbohydrate metabolism; tricarboxylic acid cycle; oxaloacetate from (S)-malate (quinone route): step 1/1. The sequence is that of Probable malate:quinone oxidoreductase from Geobacillus kaustophilus (strain HTA426).